The following is a 632-amino-acid chain: Protein EAP1 (632 aa).

3 disordered regions span residues 1–80 (MELN…KKNK), 149–204 (MGPP…DDEE), and 248–313 (KSKG…PSLS). Polar residues-rich tracts occupy residues 7-38 (SIIS…SNLF) and 54-69 (VESS…ATSG). At serine 30 the chain carries Phosphoserine. Residues serine 281 and serine 282 each carry the phosphoserine modification. A compositionally biased stretch (basic and acidic residues) spans 288 to 298 (NLKRQDKKEES). Residues serine 327 and serine 344 each carry the phosphoserine modification. Positions 347–378 (SLPSLDNNNQVPSSNVSVVNNDGNSTPHQSGS) are disordered. Positions 353–371 (NNNQVPSSNVSVVNNDGNS) are enriched in low complexity. The residue at position 387 (serine 387) is a Phosphoserine. Disordered regions lie at residues 429–541 (QHPP…PPPP) and 587–632 (QGNF…KNIK). Residue 440–447 (GLLNKGKS) coordinates ATP. Residues 474–486 (PNFPQRMMPPPPG) are compositionally biased toward pro residues. The span at 492–505 (KDSKDVNKKEDRQL) shows a compositional bias: basic and acidic residues. 3 stretches are compositionally biased toward polar residues: residues 507–516 (QNKNPNGTRN), 590–603 (FPPN…SNSP), and 610–621 (INANGKNVTNQL).

As to quaternary structure, interacts with SMY2, SYH1 and eIF4E.

It is found in the cytoplasm. Its function is as follows. Can regulate translation through binding to eIF4E. Competes with eIF4G and p20 for binding to eIF4E in vivo and inhibits cap-dependent translation in vitro. Plays a role in cell growth and is implicated in the TOR signaling cascade. Functions independently of eIF4E to maintain genetic stability and to attenuate GCN4 translation upon TOR inactivation. This Saccharomyces cerevisiae (strain ATCC 204508 / S288c) (Baker's yeast) protein is Protein EAP1 (EAP1).